A 333-amino-acid chain; its full sequence is Structure-specific endonuclease subunit SLX1 homolog (333 aa).

The 90-residue stretch at 68 to 157 (DFFGVYCLLS…KSRRLRLLNL (90 aa)) folds into the GIY-YIG domain. Residues 237–293 (CSLCLKPILSISELLRCHANETCKSHFHMRCLSKHALNAVDEYRTSLFPIQGQCPKC) form an SLX1-type zinc finger.

It belongs to the SLX1 family. Forms a heterodimer with a member of the SLX4 family. A divalent metal cation is required as a cofactor.

Its subcellular location is the nucleus. Functionally, catalytic subunit of a heterodimeric structure-specific endonuclease that resolves DNA secondary structures generated during DNA repair and recombination. Has endonuclease activity towards branched DNA substrates, introducing single-strand cuts in duplex DNA close to junctions with ss-DNA. The chain is Structure-specific endonuclease subunit SLX1 homolog from Brugia malayi (Filarial nematode worm).